The primary structure comprises 285 residues: Phosphatidylserine decarboxylase proenzyme (285 aa).

Catalysis depends on charge relay system; for autoendoproteolytic cleavage activity residues D89, H146, and S252. Residue S252 is the Schiff-base intermediate with substrate; via pyruvic acid; for decarboxylase activity of the active site. S252 carries the post-translational modification Pyruvic acid (Ser); by autocatalysis.

Belongs to the phosphatidylserine decarboxylase family. PSD-B subfamily. Prokaryotic type I sub-subfamily. As to quaternary structure, heterodimer of a large membrane-associated beta subunit and a small pyruvoyl-containing alpha subunit. Pyruvate is required as a cofactor. Is synthesized initially as an inactive proenzyme. Formation of the active enzyme involves a self-maturation process in which the active site pyruvoyl group is generated from an internal serine residue via an autocatalytic post-translational modification. Two non-identical subunits are generated from the proenzyme in this reaction, and the pyruvate is formed at the N-terminus of the alpha chain, which is derived from the carboxyl end of the proenzyme. The autoendoproteolytic cleavage occurs by a canonical serine protease mechanism, in which the side chain hydroxyl group of the serine supplies its oxygen atom to form the C-terminus of the beta chain, while the remainder of the serine residue undergoes an oxidative deamination to produce ammonia and the pyruvoyl prosthetic group on the alpha chain. During this reaction, the Ser that is part of the protease active site of the proenzyme becomes the pyruvoyl prosthetic group, which constitutes an essential element of the active site of the mature decarboxylase.

It localises to the cell membrane. The catalysed reaction is a 1,2-diacyl-sn-glycero-3-phospho-L-serine + H(+) = a 1,2-diacyl-sn-glycero-3-phosphoethanolamine + CO2. Its pathway is phospholipid metabolism; phosphatidylethanolamine biosynthesis; phosphatidylethanolamine from CDP-diacylglycerol: step 2/2. Functionally, catalyzes the formation of phosphatidylethanolamine (PtdEtn) from phosphatidylserine (PtdSer). This is Phosphatidylserine decarboxylase proenzyme from Vibrio parahaemolyticus serotype O3:K6 (strain RIMD 2210633).